A 131-amino-acid chain; its full sequence is PDZ domain-containing protein C52A11.3 (131 aa).

The region spanning 51–127 (LVKLQKDANR…RLYLQIARPH (77 aa)) is the PDZ domain.

This chain is PDZ domain-containing protein C52A11.3, found in Caenorhabditis elegans.